The chain runs to 415 residues: Gamma-glutamyl phosphate reductase (415 aa).

It belongs to the gamma-glutamyl phosphate reductase family.

The protein localises to the cytoplasm. The enzyme catalyses L-glutamate 5-semialdehyde + phosphate + NADP(+) = L-glutamyl 5-phosphate + NADPH + H(+). It participates in amino-acid biosynthesis; L-proline biosynthesis; L-glutamate 5-semialdehyde from L-glutamate: step 2/2. Catalyzes the NADPH-dependent reduction of L-glutamate 5-phosphate into L-glutamate 5-semialdehyde and phosphate. The product spontaneously undergoes cyclization to form 1-pyrroline-5-carboxylate. The protein is Gamma-glutamyl phosphate reductase of Bacillus subtilis (strain 168).